The chain runs to 464 residues: Adenylyltransferase and sulfurtransferase MOCS3 (464 aa).

Residues Gly101, Asp122, 129-133, Lys146, and 190-191 each bind ATP; these read NNMHR and DN. Residues Cys231 and Cys234 each contribute to the Zn(2+) site. Residue Cys248 is the Glycyl thioester intermediate; for adenylyltransferase activity of the active site. Residues Cys306 and Cys309 each coordinate Zn(2+). The region spanning 358 to 462 is the Rhodanese domain; that stretch reads KKEQHVLLDV…WAANVNPNFP (105 aa). Cys422 (cysteine persulfide intermediate; for sulfurtransferase activity) is an active-site residue.

The protein in the N-terminal section; belongs to the HesA/MoeB/ThiF family. UBA4 subfamily. The cofactor is Zn(2+).

It is found in the cytoplasm. It carries out the reaction [molybdopterin-synthase sulfur-carrier protein]-C-terminal Gly-Gly + ATP + H(+) = [molybdopterin-synthase sulfur-carrier protein]-C-terminal Gly-Gly-AMP + diphosphate. The catalysed reaction is [molybdopterin-synthase sulfur-carrier protein]-C-terminal Gly-Gly-AMP + S-sulfanyl-L-cysteinyl-[cysteine desulfurase] + AH2 = [molybdopterin-synthase sulfur-carrier protein]-C-terminal-Gly-aminoethanethioate + L-cysteinyl-[cysteine desulfurase] + A + AMP + 2 H(+). It participates in tRNA modification; 5-methoxycarbonylmethyl-2-thiouridine-tRNA biosynthesis. It functions in the pathway cofactor biosynthesis; molybdopterin biosynthesis. In terms of biological role, plays a central role in 2-thiolation of mcm(5)S(2)U at tRNA wobble positions of cytosolic tRNA(Lys), tRNA(Glu) and tRNA(Gln). Also essential during biosynthesis of the molybdenum cofactor. Acts by mediating the C-terminal thiocarboxylation of sulfur carriers URM1 and MOCS2A. Its N-terminus first activates URM1 and MOCS2A as acyl-adenylates (-COAMP), then the persulfide sulfur on the catalytic cysteine is transferred to URM1 and MOCS2A to form thiocarboxylation (-COSH) of their C-terminus. The reaction probably involves hydrogen sulfide that is generated from the persulfide intermediate and that acts as a nucleophile towards URM1 and MOCS2A. Subsequently, a transient disulfide bond is formed. Does not use thiosulfate as sulfur donor; NFS1 probably acting as a sulfur donor for thiocarboxylation reactions. In Arabidopsis thaliana (Mouse-ear cress), this protein is Adenylyltransferase and sulfurtransferase MOCS3.